A 181-amino-acid chain; its full sequence is 30 kDa heat shock protein (181 aa).

A sHSP domain is found at 33–181 (ASVQSFAPRF…PPTAKKITIQ (149 aa)). The span at 79-115 (GRSEREYHSSSDDNKNDQADTENQARGESSEVAKTGE) shows a compositional bias: basic and acidic residues. A disordered region spans residues 79–127 (GRSEREYHSSSDDNKNDQADTENQARGESSEVAKTGEKQVSTKKAANKS).

This sequence belongs to the small heat shock protein (HSP20) family.

This Emericella nidulans (strain FGSC A4 / ATCC 38163 / CBS 112.46 / NRRL 194 / M139) (Aspergillus nidulans) protein is 30 kDa heat shock protein (hsp30).